The primary structure comprises 82 residues: Translation initiation factor IF-1, chloroplastic (82 aa).

Positions 1 to 72 constitute an S1-like domain; sequence MNKQNLIDVE…TKGRIIYRLR (72 aa).

The protein belongs to the IF-1 family. In terms of assembly, component of the 30S ribosomal translation pre-initiation complex which assembles on the 30S ribosome in the order IF-2 and IF-3, IF-1 and N-formylmethionyl-tRNA(fMet); mRNA recruitment can occur at any time during PIC assembly.

It is found in the plastid. The protein localises to the chloroplast. In terms of biological role, one of the essential components for the initiation of protein synthesis. Stabilizes the binding of IF-2 and IF-3 on the 30S subunit to which N-formylmethionyl-tRNA(fMet) subsequently binds. Helps modulate mRNA selection, yielding the 30S pre-initiation complex (PIC). Upon addition of the 50S ribosomal subunit IF-1, IF-2 and IF-3 are released leaving the mature 70S translation initiation complex. The chain is Translation initiation factor IF-1, chloroplastic from Cycas taitungensis (Prince sago).